The chain runs to 547 residues: uncharacterized protein (547 aa).

Residues 38-50 (RNLPFHREREKVE) show a composition bias toward basic and acidic residues. Residues 38-89 (RNLPFHREREKVESNPNSSDEEDLTSTNNTRSSDNTTSDTEDDSGEDSYQVE) form a disordered region. The segment covering 62 to 75 (TSTNNTRSSDNTTS) has biased composition (low complexity). Helical transmembrane passes span 108–128 (IYTL…SSIF), 148–168 (LCSA…APLS), 174–194 (LPLY…GGCS), 197–217 (IWSL…PMSA), 233–253 (GALL…PVMG), 265–285 (WDFW…CFTM), 346–366 (MYLV…PLIF), 377–397 (GLAI…TPII), 418–438 (LFPL…LGWT), 445–465 (WAAP…VLAV), 478–500 (AASA…TIVA), and 514–534 (SLLA…FFWG).

Belongs to the major facilitator superfamily. CAR1 family.

The protein localises to the membrane. This is an uncharacterized protein from Schizosaccharomyces pombe (strain 972 / ATCC 24843) (Fission yeast).